The sequence spans 375 residues: Chaperone protein DnaJ (375 aa).

The region spanning 5–70 (DYYEVLGVSR…EKRARYDRFG (66 aa)) is the J domain. The CR-type zinc finger occupies 136–214 (GDEVTLRIPK…CRGAGQVQDI (79 aa)). Positions 149, 152, 166, 169, 188, 191, 202, and 205 each coordinate Zn(2+). 4 CXXCXGXG motif repeats span residues 149–156 (CPDCSGSG), 166–173 (CPQCGGSG), 188–195 (CSACRGEG), and 202–209 (CPRCRGAG).

Belongs to the DnaJ family. As to quaternary structure, homodimer. The cofactor is Zn(2+).

The protein resides in the cytoplasm. Participates actively in the response to hyperosmotic and heat shock by preventing the aggregation of stress-denatured proteins and by disaggregating proteins, also in an autonomous, DnaK-independent fashion. Unfolded proteins bind initially to DnaJ; upon interaction with the DnaJ-bound protein, DnaK hydrolyzes its bound ATP, resulting in the formation of a stable complex. GrpE releases ADP from DnaK; ATP binding to DnaK triggers the release of the substrate protein, thus completing the reaction cycle. Several rounds of ATP-dependent interactions between DnaJ, DnaK and GrpE are required for fully efficient folding. Also involved, together with DnaK and GrpE, in the DNA replication of plasmids through activation of initiation proteins. The sequence is that of Chaperone protein DnaJ from Oleidesulfovibrio alaskensis (strain ATCC BAA-1058 / DSM 17464 / G20) (Desulfovibrio alaskensis).